We begin with the raw amino-acid sequence, 95 residues long: Cytochrome b-c1 complex subunit 8, mitochondrial (95 aa).

Residues 57 to 74 form a helical membrane-spanning segment; sequence FLYVAIPFVVVWSIWTRA.

This sequence belongs to the UQCRQ/QCR8 family. In terms of assembly, component of the ubiquinol-cytochrome c oxidoreductase (cytochrome b-c1 complex, complex III, CIII), a multisubunit enzyme composed of 10 subunits. The complex is composed of 3 respiratory subunits cytochrome b (COB), cytochrome c1 (CYT1) and Rieske protein (RIP1), 2 core protein subunits COR1 and QCR2, and 5 low-molecular weight protein subunits QCR6, QCR7, QCR8, QCR9 and QCR10. The complex exists as an obligatory dimer and forms supercomplexes (SCs) in the inner mitochondrial membrane with a monomer or a dimer of cytochrome c oxidase (complex IV, CIV), resulting in 2 different assemblies (supercomplexes III(2)IV and III(2)IV(2)).

The protein resides in the membrane. It localises to the mitochondrion inner membrane. In terms of biological role, component of the ubiquinol-cytochrome c oxidoreductase, a multisubunit transmembrane complex that is part of the mitochondrial electron transport chain which drives oxidative phosphorylation. The complex plays an important role in the uptake of multiple carbon sources present in different host niches. The chain is Cytochrome b-c1 complex subunit 8, mitochondrial from Candida albicans (strain SC5314 / ATCC MYA-2876) (Yeast).